The sequence spans 296 residues: Circadian clock oscillator protein KaiA (296 aa).

A psR domain, binds oxidized quinones region spans residues 2-133 (ARPGLTIALL…LRQGRADGRS (132 aa)). The KaiA N-terminal domain maps to 2–152 (ARPGLTIALL…KLSRRLQERL (151 aa)). Positions 153-161 (GYLGVFYKR) are flexible linker. In terms of domain architecture, KaiA C-terminal spans 162-270 (DPSRFLGSLP…CEMYRRSIPP (109 aa)).

As to quaternary structure, homodimer. The KaiABC complex composition changes during the circadian cycle to control KaiC phosphorylation. Complexes KaiC(6), KaiA(2-4):KaiC(6), KaiB(6):KaiC(6) and KaiC(6):KaiB(6):KaiA(12) are among the most important forms, many form cooperatively. KaiA and CikA bind to the same region of the KaiB(fs) form and therefore compete.

Functionally, key component of the KaiABC oscillator complex, which constitutes the main circadian regulator in cyanobacteria. Complex composition changes during the circadian cycle to control KaiC phosphorylation. KaiA stimulates KaiC autophosphorylation, while KaiB sequesters KaiA, leading to KaiC autodephosphorylation. KaiA binding to the KaiC CII domain during the subjective day yields KaiA(2-4):KaiC(6) complexes which stimulate KaiC autophosphorylation. Phospho-Ser-431 KaiC accumulation triggers binding of KaiB during the subjective night to form the KaiB(6):KaiC(6) complex, leading to changes in the output regulators CikA and SasA. KaiB(6):KaiC(6) formation exposes a site for KaiA binding on KaiB that sequesters KaiA from KaiC's CII domain, making the KaiC(6):KaiB(6):KaiA(12) complex resulting in KaiC autodephosphorylation. Complete dephosphorylation of KaiC leads to dissociation of KaiA(2):KaiB(1), completing 1 cycle of the Kai oscillator. Its function is as follows. Binds oxidized quinones via the N-terminal PsR domain, allowing it to sense redox changes and possibly mediate clock input. The chain is Circadian clock oscillator protein KaiA from Parasynechococcus marenigrum (strain WH8102).